The following is a 185-amino-acid chain: UPF0149 protein XF_2010 (185 aa).

It belongs to the UPF0149 family.

In Xylella fastidiosa (strain 9a5c), this protein is UPF0149 protein XF_2010.